The primary structure comprises 75 residues: Cruzioseptin-8 (75 aa).

An N-terminal signal peptide occupies residues 1-22; that stretch reads MAFLKKCLFLVLFLGLVSLSIC. A propeptide spanning residues 23-43 is cleaved from the precursor; it reads EEEKREEENEEVQEDDDQSEE. The disordered stretch occupies residues 25 to 44; that stretch reads EKREEENEEVQEDDDQSEEK. Residues 30–41 show a composition bias toward acidic residues; sequence ENEEVQEDDDQS. Gln-72 bears the Glutamine amide mark. A propeptide spanning residues 74-75 is cleaved from the precursor; the sequence is EQ.

As to expression, expressed by the skin glands.

The protein localises to the secreted. In terms of biological role, has antimicrobial activity. The polypeptide is Cruzioseptin-8 (Cruziohyla calcarifer (Splendid leaf frog)).